The sequence spans 507 residues: GMP synthase [glutamine-hydrolyzing] 1 (507 aa).

A Glutamine amidotransferase type-1 domain is found at 4–193; the sequence is KIIILDFGSQ…VVDVCGCKQD (190 aa). The Nucleophile role is filled by cysteine 79. Residues histidine 167 and glutamate 169 contribute to the active site. Positions 194-382 constitute a GMPS ATP-PPase domain; sequence WSPASFIEST…LGMPEHLITR (189 aa). Residue 221–227 participates in ATP binding; sequence SGGVDSS.

In terms of assembly, homodimer.

It catalyses the reaction XMP + L-glutamine + ATP + H2O = GMP + L-glutamate + AMP + diphosphate + 2 H(+). It functions in the pathway purine metabolism; GMP biosynthesis; GMP from XMP (L-Gln route): step 1/1. Functionally, catalyzes the synthesis of GMP from XMP. This is GMP synthase [glutamine-hydrolyzing] 1 (guaA1) from Bacteroides thetaiotaomicron (strain ATCC 29148 / DSM 2079 / JCM 5827 / CCUG 10774 / NCTC 10582 / VPI-5482 / E50).